The sequence spans 1450 residues: M-protein, striated muscle (1450 aa).

The disordered stretch occupies residues 66 to 87; the sequence is AHEAMQESRKRTHEQKSHASDE. Ig-like C2-type domains are found at residues 142–233 and 254–359; these read PEIL…CAVV and PLSY…AFLF. Fibronectin type-III domains lie at 373–468, 501–596, 602–695, 698–800, and 803–900; these read APMD…ALDP, PPTN…PQDI, APGR…VQAA, CPSY…TMPE, and PAYD…ASPG. 5 consecutive Ig-like C2-type domains span residues 899 to 995, 1002 to 1115, 1118 to 1204, 1225 to 1322, and 1333 to 1422; these read PGTK…LMTL, PTIP…FLRK, PHFS…LELS, PLKI…QRLK, and KVIG…VTVS.

In terms of tissue distribution, expressed in pectoralis and cardiac muscle.

Is a structural constituent of myofibrillar M-band in striated muscle. This is M-protein, striated muscle from Gallus gallus (Chicken).